Consider the following 842-residue polypeptide: Serine/threonine-protein phosphatase 4 regulatory subunit 3 (842 aa).

In terms of assembly, regulatory subunit 3 (R3) of the histone H2A phosphatase complex (HTP-C) consisting of PPH3, PSY2 and PSY4.

The protein resides in the nucleus. Its function is as follows. Core regulatory subunit of the histone H2A phosphatase complex, which dephosphorylates H2AS128ph (gamma-H2A) that has been displaced from sites of DNA lesions in the double-stranded DNA break repair process. Dephosphorylation is necessary for efficient recovery from the DNA damage checkpoint. This is Serine/threonine-protein phosphatase 4 regulatory subunit 3 (PSY2) from Candida glabrata (strain ATCC 2001 / BCRC 20586 / JCM 3761 / NBRC 0622 / NRRL Y-65 / CBS 138) (Yeast).